Here is a 387-residue protein sequence, read N- to C-terminus: Gamma-butyrobetaine dioxygenase (387 aa).

Residues cysteine 38, cysteine 40, cysteine 43, and histidine 82 each coordinate Zn(2+). 3 residues coordinate Fe cation: histidine 202, aspartate 204, and histidine 347. Residue serine 351 is modified to Phosphoserine.

This sequence belongs to the gamma-BBH/TMLD family. The cofactor is Fe(2+). Requires L-ascorbate as cofactor.

It localises to the cytoplasm. It carries out the reaction 4-(trimethylamino)butanoate + 2-oxoglutarate + O2 = carnitine + succinate + CO2. Its pathway is amine and polyamine biosynthesis; carnitine biosynthesis. In terms of biological role, catalyzes the formation of L-carnitine from gamma-butyrobetaine. This is Gamma-butyrobetaine dioxygenase (BBOX1) from Pongo abelii (Sumatran orangutan).